Reading from the N-terminus, the 551-residue chain is mRNA cap guanine-N(7) methyltransferase (551 aa).

The span at 1 to 10 (MENRSSSGTP) shows a compositional bias: polar residues. The disordered stretch occupies residues 1-152 (MENRSSSGTP…DRETLRRRQE (152 aa)). 2 stretches are compositionally biased toward basic and acidic residues: residues 48–76 (VTEE…EERH) and 141–152 (LVDRETLRRRQE). The mRNA cap 0 methyltransferase domain occupies 194-551 (SKIKGLRSFN…FYHAFCFYKV (358 aa)). 203 to 204 (NN) serves as a coordination point for mRNA. Residues K207, G250, D274, D312, 355–357 (MFA), and Y360 each bind S-adenosyl-L-methionine. Positions 407–430 (KAREEQEKKEKSDEAPEDGEVEED) are disordered. Residues 408-420 (AREEQEKKEKSDE) are compositionally biased toward basic and acidic residues. The span at 421–430 (APEDGEVEED) shows a compositional bias: acidic residues.

Belongs to the class I-like SAM-binding methyltransferase superfamily. mRNA cap 0 methyltransferase family.

It localises to the nucleus. The catalysed reaction is a 5'-end (5'-triphosphoguanosine)-ribonucleoside in mRNA + S-adenosyl-L-methionine = a 5'-end (N(7)-methyl 5'-triphosphoguanosine)-ribonucleoside in mRNA + S-adenosyl-L-homocysteine. Functionally, responsible for methylating the 5'-cap structure of mRNAs. The protein is mRNA cap guanine-N(7) methyltransferase (abd1) of Aspergillus clavatus (strain ATCC 1007 / CBS 513.65 / DSM 816 / NCTC 3887 / NRRL 1 / QM 1276 / 107).